The primary structure comprises 210 residues: Thymidylate kinase (210 aa).

11 to 18 serves as a coordination point for ATP; sequence GVDGAGKT.

Belongs to the thymidylate kinase family.

It catalyses the reaction dTMP + ATP = dTDP + ADP. Functionally, phosphorylation of dTMP to form dTDP in both de novo and salvage pathways of dTTP synthesis. The chain is Thymidylate kinase (tmk) from Mycoplasma genitalium (strain ATCC 33530 / DSM 19775 / NCTC 10195 / G37) (Mycoplasmoides genitalium).